The following is a 743-amino-acid chain: Phosphoribosylformylglycinamidine synthase subunit PurL (743 aa).

H54 is an active-site residue. The ATP site is built by Y57 and K96. Residue E98 participates in Mg(2+) binding. Substrate-binding positions include 99 to 102 (SHNH) and R121. The Proton acceptor role is filled by H100. Position 122 (D122) interacts with Mg(2+). Residue Q245 participates in substrate binding. D273 contributes to the Mg(2+) binding site. Residue 317–319 (ESQ) coordinates substrate. Residues D500 and G537 each coordinate ATP. N538 contributes to the Mg(2+) binding site. S540 provides a ligand contact to substrate.

This sequence belongs to the FGAMS family. Monomer. Part of the FGAM synthase complex composed of 1 PurL, 1 PurQ and 2 PurS subunits.

It localises to the cytoplasm. The catalysed reaction is N(2)-formyl-N(1)-(5-phospho-beta-D-ribosyl)glycinamide + L-glutamine + ATP + H2O = 2-formamido-N(1)-(5-O-phospho-beta-D-ribosyl)acetamidine + L-glutamate + ADP + phosphate + H(+). Its pathway is purine metabolism; IMP biosynthesis via de novo pathway; 5-amino-1-(5-phospho-D-ribosyl)imidazole from N(2)-formyl-N(1)-(5-phospho-D-ribosyl)glycinamide: step 1/2. Part of the phosphoribosylformylglycinamidine synthase complex involved in the purines biosynthetic pathway. Catalyzes the ATP-dependent conversion of formylglycinamide ribonucleotide (FGAR) and glutamine to yield formylglycinamidine ribonucleotide (FGAM) and glutamate. The FGAM synthase complex is composed of three subunits. PurQ produces an ammonia molecule by converting glutamine to glutamate. PurL transfers the ammonia molecule to FGAR to form FGAM in an ATP-dependent manner. PurS interacts with PurQ and PurL and is thought to assist in the transfer of the ammonia molecule from PurQ to PurL. In Bacillus pumilus (strain SAFR-032), this protein is Phosphoribosylformylglycinamidine synthase subunit PurL.